A 480-amino-acid chain; its full sequence is Adenosylhomocysteinase (480 aa).

Residues Thr-63, Asp-142, and Glu-203 each coordinate substrate. Residue Thr-204–Thr-206 participates in NAD(+) binding. Lys-233 and Asp-237 together coordinate substrate. NAD(+) contacts are provided by residues Asn-238, Gly-267 to Gly-272, Glu-290, Asn-325, Ile-346 to His-348, and Asn-394.

It belongs to the adenosylhomocysteinase family. The cofactor is NAD(+).

Its subcellular location is the cytoplasm. The catalysed reaction is S-adenosyl-L-homocysteine + H2O = L-homocysteine + adenosine. It participates in amino-acid biosynthesis; L-homocysteine biosynthesis; L-homocysteine from S-adenosyl-L-homocysteine: step 1/1. Its function is as follows. May play a key role in the regulation of the intracellular concentration of adenosylhomocysteine. This chain is Adenosylhomocysteinase, found in Xylella fastidiosa (strain M12).